The chain runs to 2194 residues: Glutamate synthase [NADH], amyloplastic (2194 aa).

The N-terminal 101 residues, 1–101 (MSNSLSLTFT…LYDPAFDKDS (101 aa)), are a transit peptide targeting the amyloplast. Catalysis depends on C102, which acts as the Nucleophile. In terms of domain architecture, Glutamine amidotransferase type-2 spans 102-503 (CGVGFVAELN…PGMMLLVDFE (402 aa)). Residues 1021 to 1045 (GGKSNTGEGGEQPSRMEPLADGSRN) are disordered. Position 1193 to 1250 (1193 to 1250 (LAETHQTLVANDLRGRTTLQTDGQLKTGRDVAIAALLGAEEYGFSTAPLITLGCIMMR)) interacts with FMN. [3Fe-4S] cluster is bound by residues C1246, C1252, and C1257. Position 1974 to 1988 (1974 to 1988 (GGGDTGTDCIGTSIR)) interacts with NAD(+).

Belongs to the glutamate synthase family. Monomer. [3Fe-4S] cluster serves as cofactor. Requires FAD as cofactor. It depends on FMN as a cofactor. In terms of tissue distribution, expressed in infected cells in root nodules. Barely detected in roots and stems.

The protein localises to the plastid. It is found in the amyloplast. It catalyses the reaction 2 L-glutamate + NAD(+) = L-glutamine + 2-oxoglutarate + NADH + H(+). It functions in the pathway amino-acid biosynthesis; L-glutamate biosynthesis via GLT pathway; L-glutamate from 2-oxoglutarate and L-glutamine (NAD(+) route): step 1/1. It participates in energy metabolism; nitrogen metabolism. Inhibited by malate, citrate, glutamate, NAD(+) and azaserine, but not by 2-2' dipyridil and N-ethylmaleimide. Its function is as follows. Required for the assimilation of symbiotically fixed nitrogen into amino acids in root nodules. The sequence is that of Glutamate synthase [NADH], amyloplastic from Medicago sativa (Alfalfa).